We begin with the raw amino-acid sequence, 103 residues long: Small ribosomal subunit protein uS10 (103 aa).

Belongs to the universal ribosomal protein uS10 family. In terms of assembly, part of the 30S ribosomal subunit.

Involved in the binding of tRNA to the ribosomes. This is Small ribosomal subunit protein uS10 from Aromatoleum aromaticum (strain DSM 19018 / LMG 30748 / EbN1) (Azoarcus sp. (strain EbN1)).